The chain runs to 127 residues: Small ribosomal subunit protein bS6 (127 aa).

A compositionally biased stretch (basic and acidic residues) spans 106 to 117 (ERKAQSEKKEAE). Residues 106-127 (ERKAQSEKKEAEVSEGEGGTEA) are disordered. The segment covering 118–127 (VSEGEGGTEA) has biased composition (acidic residues).

Belongs to the bacterial ribosomal protein bS6 family.

Binds together with bS18 to 16S ribosomal RNA. The sequence is that of Small ribosomal subunit protein bS6 from Thermotoga neapolitana (strain ATCC 49049 / DSM 4359 / NBRC 107923 / NS-E).